Reading from the N-terminus, the 332-residue chain is Glycerol-3-phosphate dehydrogenase [NAD(P)+] (332 aa).

Serine 11, phenylalanine 12, lysine 32, and lysine 106 together coordinate NADPH. Residues lysine 106, glycine 137, and serine 139 each contribute to the sn-glycerol 3-phosphate site. An NADPH-binding site is contributed by alanine 141. 5 residues coordinate sn-glycerol 3-phosphate: lysine 192, aspartate 245, serine 255, arginine 256, and asparagine 257. Lysine 192 serves as the catalytic Proton acceptor. Position 256 (arginine 256) interacts with NADPH. 2 residues coordinate NADPH: valine 280 and glutamate 282.

This sequence belongs to the NAD-dependent glycerol-3-phosphate dehydrogenase family.

The protein resides in the cytoplasm. It carries out the reaction sn-glycerol 3-phosphate + NAD(+) = dihydroxyacetone phosphate + NADH + H(+). The enzyme catalyses sn-glycerol 3-phosphate + NADP(+) = dihydroxyacetone phosphate + NADPH + H(+). Its pathway is membrane lipid metabolism; glycerophospholipid metabolism. Functionally, catalyzes the reduction of the glycolytic intermediate dihydroxyacetone phosphate (DHAP) to sn-glycerol 3-phosphate (G3P), the key precursor for phospholipid synthesis. This chain is Glycerol-3-phosphate dehydrogenase [NAD(P)+], found in Staphylococcus epidermidis (strain ATCC 35984 / DSM 28319 / BCRC 17069 / CCUG 31568 / BM 3577 / RP62A).